The following is a 2193-amino-acid chain: Protein sidekick-1 (2193 aa).

A compositionally biased stretch (low complexity) spans 1 to 23 (MARARPSVAGGGVAAPPERAGPG). A disordered region spans residues 1–56 (MARARPSVAGGGVAAPPERAGPGRPRRSRTGHHCDPECPGLRAAPRTPGPGAGRRA). 5 consecutive Ig-like C2-type domains span residues 86-168 (PYFK…SEIQ), 173-259 (GNFM…SPFI), 275-363 (PIIV…AFLS), 368-458 (PYFT…LDVT), and 462-551 (PAFT…AMLT). A disulfide bridge links Cys-108 with Cys-151. N-linked (GlcNAc...) asparagine glycans are attached at residues Asn-123, Asn-253, and Asn-283. Intrachain disulfides connect Cys-297-Cys-344, Cys-390-Cys-440, and Cys-483-Cys-535. Residues Asn-532, Asn-545, and Asn-554 are each glycosylated (N-linked (GlcNAc...) asparagine). One can recognise an Ig-like C2-type 6 domain in the interval 556–645 (TSIVHPPEDR…GSDSRTARLE (90 aa)). Cys-577 and Cys-629 form a disulfide bridge. Fibronectin type-III domains follow at residues 652-748 (PPQN…LPEE), 753-849 (PPKN…TLQG), 854-952 (PPQN…THED), 956-1050 (AVGH…VPPD), 1054-1153 (APSN…TLQA), 1158-1256 (APTS…TRES), 1261-1358 (APEN…TKDD), 1362-1456 (PPVR…TEKR), 1461-1558 (PPRE…TLQD), 1563-1681 (PPGS…VGEA), 1686-1782 (APQN…THQA), 1786-1881 (PPSF…AGPA), and 1884-1982 (SPGS…SAQA). Residues Asn-764, Asn-803, Asn-864, Asn-997, and Asn-1006 are each glycosylated (N-linked (GlcNAc...) asparagine). N-linked (GlcNAc...) asparagine glycans are attached at residues Asn-1264 and Asn-1315. 4 N-linked (GlcNAc...) asparagine glycosylation sites follow: Asn-1636, Asn-1730, Asn-1801, and Asn-1875. Residues 1992–2012 (FLLVMALSSLLLILLVVFVLV) form a helical membrane-spanning segment. Topologically, residues 2013–2193 (LHGQSKKYKS…APLTGFSSFV (181 aa)) are cytoplasmic. The tract at residues 2057 to 2080 (STFSKKNGTRSPPRPSPGGLHYSD) is disordered. Residues 2187–2193 (TGFSSFV) carry the PDZ-binding motif.

Belongs to the sidekick family. In terms of assembly, homodimer; mediates homophilic interactions to promote cell adhesion. Interacts (via PDZ-binding motif) with MAGI1, MAGI2, DLG2, DLG3 and DLG4. As to quaternary structure, does not mediate homophilic interactions. As to expression, expressed by non-overlapping subsets of retinal neurons. Sdk1 and Sdk2 are expressed in non-overlapping subsets of interneurons and retinal ganglion cells (RGCs) that form synapses in distinct inner plexiform layer (IPL) sublaminae (at protein level).

Its subcellular location is the cell membrane. It localises to the synapse. Adhesion molecule that promotes lamina-specific synaptic connections in the retina. Expressed in specific subsets of interneurons and retinal ganglion cells (RGCs) and promotes synaptic connectivity via homophilic interactions. The chain is Protein sidekick-1 from Mus musculus (Mouse).